A 369-amino-acid polypeptide reads, in one-letter code: Phosphoribosyl pyrophosphate synthase-associated protein 2 (369 aa).

Met1 is subject to N-acetylmethionine. Phosphoserine is present on residues Ser219, Ser227, and Ser233.

This sequence belongs to the ribose-phosphate pyrophosphokinase family. Binds to PRPS1 and PRPS2.

Seems to play a negative regulatory role in 5-phosphoribose 1-diphosphate synthesis. The polypeptide is Phosphoribosyl pyrophosphate synthase-associated protein 2 (Prpsap2) (Mus musculus (Mouse)).